The following is a 246-amino-acid chain: Phosphatidylserine decarboxylase proenzyme (246 aa).

The active-site Schiff-base intermediate with substrate; via pyruvic acid is the Ser-204. Pyruvic acid (Ser); by autocatalysis is present on Ser-204.

The protein belongs to the phosphatidylserine decarboxylase family. PSD-A subfamily. As to quaternary structure, heterodimer of a large membrane-associated beta subunit and a small pyruvoyl-containing alpha subunit. It depends on pyruvate as a cofactor. Is synthesized initially as an inactive proenzyme. Formation of the active enzyme involves a self-maturation process in which the active site pyruvoyl group is generated from an internal serine residue via an autocatalytic post-translational modification. Two non-identical subunits are generated from the proenzyme in this reaction, and the pyruvate is formed at the N-terminus of the alpha chain, which is derived from the carboxyl end of the proenzyme. The post-translation cleavage follows an unusual pathway, termed non-hydrolytic serinolysis, in which the side chain hydroxyl group of the serine supplies its oxygen atom to form the C-terminus of the beta chain, while the remainder of the serine residue undergoes an oxidative deamination to produce ammonia and the pyruvoyl prosthetic group on the alpha chain.

It localises to the cell membrane. It catalyses the reaction a 1,2-diacyl-sn-glycero-3-phospho-L-serine + H(+) = a 1,2-diacyl-sn-glycero-3-phosphoethanolamine + CO2. Its pathway is phospholipid metabolism; phosphatidylethanolamine biosynthesis; phosphatidylethanolamine from CDP-diacylglycerol: step 2/2. Functionally, catalyzes the formation of phosphatidylethanolamine (PtdEtn) from phosphatidylserine (PtdSer). This Zymomonas mobilis subsp. mobilis (strain ATCC 31821 / ZM4 / CP4) protein is Phosphatidylserine decarboxylase proenzyme.